Reading from the N-terminus, the 298-residue chain is Glutamyl-Q tRNA(Asp) synthetase (298 aa).

L-glutamate is bound by residues 9 to 13 (RFAPS) and Glu45. A 'HIGH' region motif is present at residues 12–22 (PSPSGELHFGS). Zn(2+)-binding residues include Cys101, Cys103, Tyr115, and Cys119. L-glutamate is bound by residues Tyr172 and Arg190. The 'KMSKS' region signature appears at 228-232 (KLSKQ). ATP is bound at residue Lys231.

This sequence belongs to the class-I aminoacyl-tRNA synthetase family. GluQ subfamily. The cofactor is Zn(2+).

Catalyzes the tRNA-independent activation of glutamate in presence of ATP and the subsequent transfer of glutamate onto a tRNA(Asp). Glutamate is transferred on the 2-amino-5-(4,5-dihydroxy-2-cyclopenten-1-yl) moiety of the queuosine in the wobble position of the QUC anticodon. The polypeptide is Glutamyl-Q tRNA(Asp) synthetase (Salmonella paratyphi A (strain ATCC 9150 / SARB42)).